The primary structure comprises 193 residues: Holliday junction branch migration complex subunit RuvA (193 aa).

The interval 1–64 (MIGRIAGILL…EDAHLLYGFL (64 aa)) is domain I. Positions 65–139 (TPQERTTFRE…GKLGADLGAL (75 aa)) are domain II. The interval 139 to 143 (LAGAA) is flexible linker. A domain III region spans residues 144 to 193 (SPSDHAADILNALVALGYSEKEGLAAIKNVPAGTGVSDGIKLALKALSKA).

It belongs to the RuvA family. In terms of assembly, homotetramer. Forms an RuvA(8)-RuvB(12)-Holliday junction (HJ) complex. HJ DNA is sandwiched between 2 RuvA tetramers; dsDNA enters through RuvA and exits via RuvB. An RuvB hexamer assembles on each DNA strand where it exits the tetramer. Each RuvB hexamer is contacted by two RuvA subunits (via domain III) on 2 adjacent RuvB subunits; this complex drives branch migration. In the full resolvosome a probable DNA-RuvA(4)-RuvB(12)-RuvC(2) complex forms which resolves the HJ.

Its subcellular location is the cytoplasm. Functionally, the RuvA-RuvB-RuvC complex processes Holliday junction (HJ) DNA during genetic recombination and DNA repair, while the RuvA-RuvB complex plays an important role in the rescue of blocked DNA replication forks via replication fork reversal (RFR). RuvA specifically binds to HJ cruciform DNA, conferring on it an open structure. The RuvB hexamer acts as an ATP-dependent pump, pulling dsDNA into and through the RuvAB complex. HJ branch migration allows RuvC to scan DNA until it finds its consensus sequence, where it cleaves and resolves the cruciform DNA. This is Holliday junction branch migration complex subunit RuvA from Burkholderia vietnamiensis (strain G4 / LMG 22486) (Burkholderia cepacia (strain R1808)).